The sequence spans 1249 residues: Apoptotic protease-activating factor 1 (1249 aa).

A CARD domain is found at 1–90 (MDAKARNCLL…KDLAGLLHSG (90 aa)). The NB-ARC domain occupies 106 to 415 (NTSFVRTVLC…LETEEVEDIL (310 aa)). Residues 154–161 (GMAGCGKS) and Arg-265 each bind ATP. The stretch at 613–652 (PHTDAVYHACFSQDGQRIASCGADKTLQVFKAETGEKLLD) is one WD 1-1 repeat. One copy of the WD 1-2 repeat lies at 655-694 (AHEDEVLCCAFSSDDSYIATCSVDKKVKIWDSGTGKLVHT). The stretch at 697–738 (EHSEQVNCCHFTNKSNHLLLATGSNDSFLKLWDLNQKECRNT) is one WD 1-3 repeat. A WD 1-4 repeat occupies 741–780 (GHTNSVTHCRFSPDDELLASCSADGTLKLWDVRSANEKKS). One copy of the WD 1-5 repeat lies at 796 to 837 (DVEVIVKCCSWSADGDRIIVAAKNKVLLLDIHTSGLLTEIHT). One copy of the WD 1-6 repeat lies at 838-877 (GHHSTIQYCDFSPYDHLAVIALSQYCVELWNIDSRVKVAD). One copy of the WD 1-7 repeat lies at 880–910 (GHLSWVHGVMFSPDGSSFLTASDDQTIRVWE). Residues 910–921 (ETRKVCKNSAIV) form an interpropeller linker region. One copy of the WD 2-1 repeat lies at 922–958 (LKQEIDVVFQENEMMVLAVDNIRGLQLIAGKTGQIDY). The WD 2-2 repeat unit spans residues 959–998 (LPEAQVSCCCLSPHLEYVAFGDEEGAIKIIELPNNRVFSS). The stretch at 1001 to 1040 (GHKKAVRHIQFTADGKTLISSSEDSVIQVWNWQTEEYVFL) is one WD 2-3 repeat. One copy of the WD 2-4 repeat lies at 1042 to 1080 (AHQETVKDFRLLRDSRLLSWSFDGTVKVWNVITGRIERD). The stretch at 1083–1122 (CHQGTVLSCAISSDATKFSSTSADKTAKIWSFELPSPLHE) is one WD 2-5 repeat. One copy of the WD 2-6 repeat lies at 1125–1164 (GHNSCVRCSAFSLDGILLATGDDNGEIRIWNVSDGQLLHL). One copy of the WD 2-7 repeat lies at 1176 to 1213 (THGGWVTDVCFSPDRKMLVSAGGYLKWWNVVTGESSQT). The stretch at 1214-1249 (FYTNGTNLKKIHVSPDFRTYVTVDNLGILYILQVLE) is one WD 2-8 repeat.

Monomer. Oligomerizes to a heptameric ring, known as the apoptosome, upon binding of cytochrome c and dATP. Oligomeric Apaf-1 and pro-caspase-9 bind to each other via their respective NH2-terminal CARD domains. Interacts with UACA. Interacts with APIP. Interacts (via CARD and NACHT domains) with NAIP/BIRC1 (via NACHT domain). Interacts with CIAO2A.

It is found in the cytoplasm. Its function is as follows. Regulates programmed cell death; necessary for normal brain development. Participates with pro-caspase-9 (Apaf-3) in the cytochrome c-dependent activation of caspase-3, leading to apoptosis. This activation requires ATP. The sequence is that of Apoptotic protease-activating factor 1 (Apaf1) from Rattus norvegicus (Rat).